Reading from the N-terminus, the 1066-residue chain is MQSTDLGNKESGKIWHRKPSPATRDGIIVNIIHNTSDYHPKVLRFLNVAFDGTGDCLIAGDHQGNIYVFDLHGNRFNLVQRTAQACTALAFNLRRKSEFLVALADYSIKCFDTVTKELVSWMRGHESSVFSISVHASGKYAITTSSDTAQLWDLDTFQRKRKLNIRQSVGIQKVFFLPLSNTILSCFKDNSIFAWECDTLFCKYQLPAPPESSSILYKVFAVTRDGRILAAGGKSNHLHLWCLEARQLFRIIQMPTKVRAIRHLEFLPDSFDAGSNQVLGVLSQDGIMRFINMQTCKLLFEIGSLDEGISSSAISPHGRYIASIMENGSLNIYSVQALTQEINKPPPPLVKVIEDLPKNKLSSSDLKMKVTSGRVQQPAKSRESKMQTRILKQDLTGDFESKKNELPDGLNKKRLQILLKGYGEYPTKYRMFIWRSLLQLPENHTAFSTLIDKGTHVAFLNLQKKYPIKSRKLLRVLQRTLSALAHWSVIFSDTPYLPLLAFPFVKLFQNNQLICFEVIATLIINWCQHWFEYFPNPPINILSMIENVLAFHDKELLQHFIDHDITSQLYAWPLLETVFSEVLTREEWLKLFDNIFSNHPSFLLMTVVAYNICSRTPLLSCNLKDDFEFFFHHRNNLDINVVIRQVYHLMETTPTDIHPDSMLNVFVALTKGQYPVFNQYPKFIVDYQTQERERIRNDELDYLRERQTVEDMQAKVDQQRVEDEAWYQKQELLRKAEETRREMLLQEEEKMIQQRQRLAAVKRELKVKEMHLQDAARRRFLKLQQDQQEMELRRLDDEIGRKVYMRDREIAATARDLEMRQLELESQKRLYEKNLTENQEALAKEMRADADAYRRKVDLEEHMFHKLIEAGETQSQKTQKVIKENLAKAEQACLNTDWQIQSLHKQKCDDLQRNKCYQEVAKLLRENRRKEIEIINAMVEEEAKKWKEAEGKEFRLRSAKKASALSDASRKWFLKQEINAAVEHAENPCHKEEPRFQNEQDSSCLPRTSQLNDSSEMDPSTQISLNRRAVEWDTTGQNLIKKVRNLRQRLTARARHRCQTPHLLAA.

WD repeat units lie at residues 33 to 74 (HNTS…LHGN), 75 to 116 (RFNL…TVTK), 117 to 157 (ELVS…LDTF), 158 to 200 (QRKR…CDTL), 201 to 248 (FCKY…ARQL), 249 to 296 (FRII…MQTC), and 297 to 334 (KLLF…NIYS). The Rab-GAP TBC domain maps to 424–599 (EYPTKYRMFI…KLFDNIFSNH (176 aa)). Coiled coils occupy residues 728 to 861 (QKQE…DLEE) and 914 to 948 (NKCY…KWKE). Residues 989–998 (CHKEEPRFQN) are compositionally biased toward basic and acidic residues. The disordered stretch occupies residues 989–1020 (CHKEEPRFQNEQDSSCLPRTSQLNDSSEMDPS). A compositionally biased stretch (polar residues) spans 999–1020 (EQDSSCLPRTSQLNDSSEMDPS). Residues 1053–1056 (RARH) form a mediates direct interaction with PJA2 region.

In terms of assembly, interacts with PJA2; the interaction is direct and recruits PJA2 to centrosomes. Interacts with OFD1; regulates its activity in cilium assembly. Interacts with PRKACA.

It is found in the cytoplasm. Its subcellular location is the cytoskeleton. The protein localises to the microtubule organizing center. The protein resides in the centrosome. It localises to the centriolar satellite. It is found in the cilium basal body. Functionally, molecular adapter which is involved in cilium biogenesis. Part of a functional complex including OFD1 a centriolar protein involved in cilium assembly. Could regulate the cAMP-dependent phosphorylation of OFD1, and its subsequent ubiquitination by PJA2 which ultimately leads to its proteasomal degradation. The polypeptide is TBC1 domain family member 31 (Homo sapiens (Human)).